Consider the following 367-residue polypeptide: THO complex subunit 6 (367 aa).

WD repeat units follow at residues isoleucine 23 to alanine 67, alanine 88 to valine 129, serine 157 to threonine 196, glycine 199 to glycine 240, aspartate 243 to threonine 283, proline 285 to isoleucine 322, and cysteine 324 to arginine 363.

It belongs to the WD repeat THOC6 family. In terms of assembly, component of the THO complex, which is composed of THO1, THO2, THO3, THO5, THO6 and THO7. Interacts with ABI5, DDB1A and DWA2.

It localises to the nucleus. Its pathway is protein modification; protein ubiquitination. Acts as a component of the THO subcomplex of the TREX complex which is thought to couple mRNA transcription, processing and nuclear export. Its function is as follows. Component of the CUL4-RBX1-DDB1-DWA1/DWA2 E3 ubiquitin-protein ligase complex that acts as a negative regulator in abscisic acid (ABA) signaling. May function as the substrate recognition module within this complex leading to ABI5 degradation. Functionally redundant with DWA2. The polypeptide is THO complex subunit 6 (THO6) (Arabidopsis thaliana (Mouse-ear cress)).